The primary structure comprises 573 residues: Zinc finger protein 10 (573 aa).

Residues 14–85 enclose the KRAB domain; that stretch reads VTFKDVFVDF…EREIHQETHP (72 aa). A C2H2-type 1; atypical zinc finger spans residues 206–232; it reads DSCASNSNECGQTFCQNIHLIQFARTH. 9 C2H2-type zinc fingers span residues 265–287, 293–315, 321–343, 349–371, 377–399, 405–427, 433–455, 461–483, and 489–511; these read YECK…QLIH, YECK…QKTH, YECK…QRTH, YTCN…QRTH, YECP…QRTH, YECN…HRIH, FECK…QRTH, YECH…QRIH, and YECC…QRIH. The segment at 517-539 adopts a C2H2-type 11; atypical zinc-finger fold; it reads YKCNQCGIIFSQNSPFIVHQIAH.

It belongs to the krueppel C2H2-type zinc-finger protein family. As to quaternary structure, interacts (via the KRAB domain) with TRIM28 (via the RBCC domain).

It is found in the nucleus. May be involved in transcriptional regulation. In Homo sapiens (Human), this protein is Zinc finger protein 10 (ZNF10).